The chain runs to 216 residues: Large ribosomal subunit protein uL3 (216 aa).

2 disordered regions span residues 89–108 and 139–158; these read QRAS…VGGF and NTHG…QCQS. Residue Q157 is modified to N5-methylglutamine.

Belongs to the universal ribosomal protein uL3 family. In terms of assembly, part of the 50S ribosomal subunit. Forms a cluster with proteins L14 and L19. Methylated by PrmB.

One of the primary rRNA binding proteins, it binds directly near the 3'-end of the 23S rRNA, where it nucleates assembly of the 50S subunit. This is Large ribosomal subunit protein uL3 from Halorhodospira halophila (strain DSM 244 / SL1) (Ectothiorhodospira halophila (strain DSM 244 / SL1)).